Reading from the N-terminus, the 883-residue chain is UTP--glucose-1-phosphate uridylyltransferase 3, chloroplastic (883 aa).

A chloroplast-targeting transit peptide spans 1-72 (MANPQASPIL…HQVRHVSTVP (72 aa)).

This sequence belongs to the UDPGP type 1 family. Mg(2+) serves as cofactor.

Its subcellular location is the plastid. It is found in the chloroplast. It catalyses the reaction alpha-D-glucose 1-phosphate + UTP + H(+) = UDP-alpha-D-glucose + diphosphate. Inhibited by pyrophosphate. Its function is as follows. Involved in the biosynthesis of sulfolipids in the chloroplast. Catalyzes the first committed step in sulfolipid biosynthesis. Converts glucose 1-phosphate to UDP-glucose, the precursor of the polar head of sulfolipid. In addition to glucose 1-phosphate, can use galactose 1-phosphate, but with much lower activity. No uridyltransferase activity with other hexose monophosphates. Specific for UTP and cannot use ATP, CTP, and GTP. The chain is UTP--glucose-1-phosphate uridylyltransferase 3, chloroplastic from Arabidopsis thaliana (Mouse-ear cress).